A 171-amino-acid chain; its full sequence is Peptide methionine sulfoxide reductase MsrA (171 aa).

Cys-13 is an active-site residue.

The protein belongs to the MsrA Met sulfoxide reductase family.

The enzyme catalyses L-methionyl-[protein] + [thioredoxin]-disulfide + H2O = L-methionyl-(S)-S-oxide-[protein] + [thioredoxin]-dithiol. It carries out the reaction [thioredoxin]-disulfide + L-methionine + H2O = L-methionine (S)-S-oxide + [thioredoxin]-dithiol. In terms of biological role, has an important function as a repair enzyme for proteins that have been inactivated by oxidation. Catalyzes the reversible oxidation-reduction of methionine sulfoxide in proteins to methionine. This chain is Peptide methionine sulfoxide reductase MsrA, found in Mycolicibacterium paratuberculosis (strain ATCC BAA-968 / K-10) (Mycobacterium paratuberculosis).